Consider the following 433-residue polypeptide: Glutamate-1-semialdehyde 2,1-aminomutase (433 aa).

At K267 the chain carries N6-(pyridoxal phosphate)lysine.

Belongs to the class-III pyridoxal-phosphate-dependent aminotransferase family. HemL subfamily. Homodimer. Pyridoxal 5'-phosphate is required as a cofactor.

The protein resides in the cytoplasm. The catalysed reaction is (S)-4-amino-5-oxopentanoate = 5-aminolevulinate. Its pathway is porphyrin-containing compound metabolism; protoporphyrin-IX biosynthesis; 5-aminolevulinate from L-glutamyl-tRNA(Glu): step 2/2. This is Glutamate-1-semialdehyde 2,1-aminomutase from Syntrophobacter fumaroxidans (strain DSM 10017 / MPOB).